We begin with the raw amino-acid sequence, 192 residues long: Pyridoxal 5'-phosphate synthase subunit PdxT (192 aa).

Residue 50 to 52 (GES) participates in L-glutamine binding. The active-site Nucleophile is the C82. Residues R109 and 136–137 (IR) each bind L-glutamine. Active-site charge relay system residues include H172 and E174.

This sequence belongs to the glutaminase PdxT/SNO family. In the presence of PdxS, forms a dodecamer of heterodimers. Only shows activity in the heterodimer.

The enzyme catalyses aldehydo-D-ribose 5-phosphate + D-glyceraldehyde 3-phosphate + L-glutamine = pyridoxal 5'-phosphate + L-glutamate + phosphate + 3 H2O + H(+). It carries out the reaction L-glutamine + H2O = L-glutamate + NH4(+). The protein operates within cofactor biosynthesis; pyridoxal 5'-phosphate biosynthesis. Catalyzes the hydrolysis of glutamine to glutamate and ammonia as part of the biosynthesis of pyridoxal 5'-phosphate. The resulting ammonia molecule is channeled to the active site of PdxS. The chain is Pyridoxal 5'-phosphate synthase subunit PdxT from Haemophilus influenzae (strain PittEE).